The chain runs to 352 residues: S-adenosylmethionine:tRNA ribosyltransferase-isomerase (352 aa).

Belongs to the QueA family. In terms of assembly, monomer.

Its subcellular location is the cytoplasm. It carries out the reaction 7-aminomethyl-7-carbaguanosine(34) in tRNA + S-adenosyl-L-methionine = epoxyqueuosine(34) in tRNA + adenine + L-methionine + 2 H(+). It participates in tRNA modification; tRNA-queuosine biosynthesis. Its function is as follows. Transfers and isomerizes the ribose moiety from AdoMet to the 7-aminomethyl group of 7-deazaguanine (preQ1-tRNA) to give epoxyqueuosine (oQ-tRNA). The protein is S-adenosylmethionine:tRNA ribosyltransferase-isomerase of Allorhizobium ampelinum (strain ATCC BAA-846 / DSM 112012 / S4) (Agrobacterium vitis (strain S4)).